We begin with the raw amino-acid sequence, 134 residues long: DNA polymerase III subunit psi (134 aa).

Belongs to the DNA polymerase III psi/HolD chain family. In terms of assembly, DNA polymerase III contains a core (composed of alpha, epsilon and theta chains) that associates with a tau subunit. This core dimerizes to form the POLIII' complex. PolIII' associates with the gamma complex (composed of gamma, delta, delta', psi and chi chains) and with the beta chain to form the complete DNA polymerase III complex. Interacts directly with the chi subunit (holC).

The catalysed reaction is DNA(n) + a 2'-deoxyribonucleoside 5'-triphosphate = DNA(n+1) + diphosphate. In terms of biological role, part of the beta sliding clamp loading complex, which hydrolyzes ATP to load the beta clamp onto primed DNA to form the DNA replication pre-initiation complex. DNA polymerase III is a complex, multichain enzyme responsible for most of the replicative synthesis in bacteria. This DNA polymerase also exhibits 3' to 5' exonuclease activity. In Haemophilus influenzae (strain ATCC 51907 / DSM 11121 / KW20 / Rd), this protein is DNA polymerase III subunit psi (holD).